We begin with the raw amino-acid sequence, 692 residues long: Zinc finger protein 180 (692 aa).

The region spanning 72 to 145 is the KRAB domain; the sequence is VNFKIVTVDF…GVKIERFTRD (74 aa). Residues Lys138, Lys159, Lys168, Lys191, Lys198, Lys226, Lys304, Lys313, and Lys330 each participate in a glycyl lysine isopeptide (Lys-Gly) (interchain with G-Cter in SUMO2) cross-link. C2H2-type zinc fingers lie at residues 353 to 375, 381 to 403, 409 to 431, 437 to 459, 465 to 487, 493 to 515, 521 to 543, 549 to 571, 577 to 599, 605 to 627, 633 to 655, and 661 to 683; these read FECNQCGKSFSWSSHLVAHQRTH, YECSECGKSFSRSSHLVSHQRTH, YRCNQCGKSFSQSYVLVVHQRTH, YECNQCGKSFRQSYKLIAHQRTH, YECNQCGKSFIQSYKLIAHQRIH, YECNQCGKSFSQSYKLVAHQRTH, FECNQCGKSFSWSSQLVAHQRTH, YECSECGKSFNRSSHLVMHQRIH, YECNQCGKSFSQSYVLVVHQRTH, YECSQCGKSFRQSSCLTQHQRTH, FECNQCGKTFSLSARLIVHQRTH, and FTCIQCGKAFINSYKLIRHQATH.

The protein belongs to the krueppel C2H2-type zinc-finger protein family.

It localises to the nucleus. In terms of biological role, may be involved in transcriptional regulation. The polypeptide is Zinc finger protein 180 (ZNF180) (Homo sapiens (Human)).